The following is a 710-amino-acid chain: Ephexin-1 (710 aa).

2 stretches are compositionally biased toward basic and acidic residues: residues 1–11 (METRESEDLEK) and 26–41 (EPAK…KEET). The disordered stretch occupies residues 1-143 (METRESEDLE…PGNGATPEEW (143 aa)). Residues 1-273 (METRESEDLE…LEILQPEEIK (273 aa)) are regulatory region; modulates activity toward RHOA, RAC1 and CDC42. Composition is skewed to polar residues over residues 89–102 (ADSQ…NEPL) and 127–136 (MSESSSTPGN). Tyrosine 179 bears the Phosphotyrosine mark. The segment at 194-236 (RRQQDAEIEDNTNGSPASEDTPEEEEEEEEEEEPASPPERKTL) is disordered. The span at 213–227 (DTPEEEEEEEEEEEP) shows a compositional bias: acidic residues. Positions 273 to 457 (KLQEAMFELV…EMVVKACNEG (185 aa)) constitute a DH domain. The PH domain occupies 489 to 601 (WLLKQGELQQ…WMTSLAPNRR (113 aa)). The 62-residue stretch at 612-673 (LDCPQVQCVH…PSSMTEEILN (62 aa)) folds into the SH3 domain. The span at 687–699 (VHKMDDPQRSQNK) shows a compositional bias: basic and acidic residues. Positions 687–710 (VHKMDDPQRSQNKDRRKLGSRNRQ) are disordered. Basic residues predominate over residues 700–710 (DRRKLGSRNRQ).

As to quaternary structure, interacts with CDK5R1 and EPHA4; activated by EPHA4 through the CDK5 kinase. Src-dependent phosphorylation at Tyr-179 upon EPHA4 activation increases the guanine exchange factor activity toward RHOA. Phosphorylation by CDK5 upon EPHA4 activation by EFNA1 may regulate dendritic spine morphogenesis. In terms of tissue distribution, highly expressed in brain specifically in caudate nucleus and to a lower extent in amygdala and hippocampus. Also detected in lung.

The protein resides in the cytoplasm. It localises to the membrane. It is found in the cell projection. Its subcellular location is the growth cone. Functionally, acts as a guanine nucleotide exchange factor (GEF) which differentially activates the GTPases RHOA, RAC1 and CDC42. Plays a role in axon guidance regulating ephrin-induced growth cone collapse and dendritic spine morphogenesis. Upon activation by ephrin through EPHA4, the GEF activity switches toward RHOA resulting in its activation. Activated RHOA promotes cone retraction at the expense of RAC1- and CDC42-stimulated growth cone extension. This Homo sapiens (Human) protein is Ephexin-1 (NGEF).